The sequence spans 515 residues: Monocarboxylate transporter 10 (515 aa).

The segment at 1–48 (MVLSQEEPDSARGTSEAQPLGPAPTGAAPPPGPGPSDSPEAAVEKVEV) is disordered. The Cytoplasmic portion of the chain corresponds to 1 to 66 (MVLSQEEPDS…EPHEPPEPPE (66 aa)). Positions 17-26 (AQPLGPAPTG) are enriched in low complexity. Residues 27–36 (AAPPPGPGPS) show a composition bias toward pro residues. A helical transmembrane segment spans residues 67–87 (GGWGWLVMLAAMWCNGSVFGI). Topologically, residues 88–114 (QNACGVLFVSMLETFGSKDDDKMVFKT) are extracellular. Residues 115-135 (AWVGSLSMGMIFFCCPIVSVF) traverse the membrane as a helical segment. Residues 136 to 144 (TDLFGCRKT) lie on the Cytoplasmic side of the membrane. The chain crosses the membrane as a helical span at residues 145-165 (AVVGAAVGFVGLMSSSFVSSI). The Extracellular portion of the chain corresponds to 166-171 (EPLYLT). A helical membrane pass occupies residues 172-192 (YGIIFACGCSFAYQPSLVILG). Residues 193–200 (HYFKKRLG) are Cytoplasmic-facing. Residues 201–221 (LVNGIVTAGSSVFTILLPLLL) traverse the membrane as a helical segment. Over 222–228 (RVLIDSV) the chain is Extracellular. A helical membrane pass occupies residues 229-249 (GLFYTLRVLCIFMFVLFLAGF). Residues 250–291 (TYRPLATSTKDKESGGSGSSLFSRKKFSPPKKIFNFAIFKVT) lie on the Cytoplasmic side of the membrane. S263 bears the Phosphoserine mark. Residues 292 to 312 (AYAVWAVGIPLALFGYFVPYV) form a helical membrane-spanning segment. The Extracellular segment spans residues 313–329 (HLMKHVNERFQDEKNKE). A helical membrane pass occupies residues 330–350 (VVLMCIGVTSGVGRLLFGRIA). Position 351 (D351) is a topological domain, cytoplasmic. A helical membrane pass occupies residues 352 to 372 (YVPGVKKVYLQVLSFFFIGLM). Topologically, residues 373–396 (SMMIPLCSIFGALIAVCLIMGLFD) are extracellular. The chain crosses the membrane as a helical span at residues 397–417 (GCFISIMAPIAFELVGAQDVS). At 418–419 (QA) the chain is on the cytoplasmic side. The chain crosses the membrane as a helical span at residues 420–440 (IGFLLGFMSIPMTVGPPIAGL). Residues 441 to 451 (LRDKLGSYDVA) lie on the Extracellular side of the membrane. The chain crosses the membrane as a helical span at residues 452–472 (FYLAGVPPLIGGAVLCFIPWI). The Cytoplasmic segment spans residues 473–515 (HSKKQREISKTTGKEKMEKMLENQNSLLSSSSGMFKKESDSII). 4 positions are modified to phosphoserine: S498, S501, S503, and S504.

It belongs to the major facilitator superfamily. Monocarboxylate porter (TC 2.A.1.13) family. In terms of processing, not N-glycosylated. In terms of tissue distribution, strongly expressed in kidney and skeletal muscle and at lower level in placenta and heart.

The protein resides in the cell membrane. It is found in the basolateral cell membrane. It catalyses the reaction 3,3',5-triiodo-L-thyronine(out) = 3,3',5-triiodo-L-thyronine(in). The catalysed reaction is L-thyroxine(out) = L-thyroxine(in). It carries out the reaction L-tryptophan(in) = L-tryptophan(out). The enzyme catalyses L-tyrosine(in) = L-tyrosine(out). It catalyses the reaction L-phenylalanine(in) = L-phenylalanine(out). Sodium- and proton-independent thyroid hormones and aromatic acids transporter. Mediates both uptake and efflux of 3,5,3'-triiodothyronine (T3) and 3,5,3',5'-tetraiodothyronine (T4) with high affinity, suggesting a role in the homeostasis of thyroid hormone levels. Responsible for low affinity bidirectional transport of the aromatic amino acids, such as phenylalanine, tyrosine, tryptophan and L-3,4-dihydroxyphenylalanine (L-dopa). Plays an important role in homeostasis of aromatic amino acids. This chain is Monocarboxylate transporter 10 (SLC16A10), found in Homo sapiens (Human).